A 282-amino-acid chain; its full sequence is Cell division protein DivIB (282 aa).

Topologically, residues Met-1–Arg-59 are cytoplasmic. Positions Glu-19–Val-41 are disordered. Over residues Gln-31–Val-41 the composition is skewed to basic residues. A helical transmembrane segment spans residues Val-60–Pro-80. Over Leu-81–Lys-282 the chain is Extracellular. The region spanning Ser-82–Asn-153 is the POTRA domain.

Belongs to the FtsQ/DivIB family. DivIB subfamily.

The protein localises to the cell membrane. Its function is as follows. Cell division protein that may be involved in stabilizing or promoting the assembly of the division complex. The chain is Cell division protein DivIB from Limosilactobacillus reuteri (strain ATCC 55730 / SD2112) (Lactobacillus reuteri).